Reading from the N-terminus, the 206-residue chain is LexA repressor (206 aa).

Residues 28–48 constitute a DNA-binding region (H-T-H motif); the sequence is RAEIATRLGFKSANAAEEHLK. Catalysis depends on for autocatalytic cleavage activity residues serine 123 and lysine 160.

This sequence belongs to the peptidase S24 family. Homodimer.

The enzyme catalyses Hydrolysis of Ala-|-Gly bond in repressor LexA.. Its function is as follows. Represses a number of genes involved in the response to DNA damage (SOS response), including recA and lexA. In the presence of single-stranded DNA, RecA interacts with LexA causing an autocatalytic cleavage which disrupts the DNA-binding part of LexA, leading to derepression of the SOS regulon and eventually DNA repair. The polypeptide is LexA repressor (Shewanella sp. (strain MR-7)).